The chain runs to 1207 residues: DNA-directed RNA polymerase subunit beta' (1207 aa).

C60, C62, C75, and C78 together coordinate Zn(2+). D449, D451, and D453 together coordinate Mg(2+). Zn(2+) contacts are provided by C822, C896, C903, and C906.

This sequence belongs to the RNA polymerase beta' chain family. As to quaternary structure, the RNAP catalytic core consists of 2 alpha, 1 beta, 1 beta' and 1 omega subunit. When a sigma factor is associated with the core the holoenzyme is formed, which can initiate transcription. The cofactor is Mg(2+). Requires Zn(2+) as cofactor.

The catalysed reaction is RNA(n) + a ribonucleoside 5'-triphosphate = RNA(n+1) + diphosphate. In terms of biological role, DNA-dependent RNA polymerase catalyzes the transcription of DNA into RNA using the four ribonucleoside triphosphates as substrates. This is DNA-directed RNA polymerase subunit beta' from Staphylococcus aureus (strain NCTC 8325 / PS 47).